Here is a 299-residue protein sequence, read N- to C-terminus: MFRGSIPPLPTPFRRGRLDEEALRRLVERVVQGGSHGVSVGGTTGEPGTQTLEERKRAIEVVLDQVAGRVPVIPGTGALRLEETLELTRFAKEAGAQGAMVIVPYYVKPNQEGLYRYFAEVARAVPDFPLLIYNIPGRAGVEIAPKTVGRLRRDFPNIVGLKHSSKDLEYLSHLFLEAGRDFLVFCGLESLTLPMMSLGAVGTIAATANWLPKEVALLCEKALAGDYQGARELHFYLLEANEAIFWDTNPIPLKTVLSWMGLLEKEWRPPLGPTTPEVEERLRRMAERYGLLPKEKEAA.

T44 is a pyruvate binding site. Y133 serves as the catalytic Proton donor/acceptor. Catalysis depends on K162, which acts as the Schiff-base intermediate with substrate. I204 lines the pyruvate pocket.

It belongs to the DapA family. In terms of assembly, homotetramer; dimer of dimers.

It localises to the cytoplasm. It catalyses the reaction L-aspartate 4-semialdehyde + pyruvate = (2S,4S)-4-hydroxy-2,3,4,5-tetrahydrodipicolinate + H2O + H(+). It participates in amino-acid biosynthesis; L-lysine biosynthesis via DAP pathway; (S)-tetrahydrodipicolinate from L-aspartate: step 3/4. In terms of biological role, catalyzes the condensation of (S)-aspartate-beta-semialdehyde [(S)-ASA] and pyruvate to 4-hydroxy-tetrahydrodipicolinate (HTPA). This is 4-hydroxy-tetrahydrodipicolinate synthase from Thermus thermophilus (strain ATCC BAA-163 / DSM 7039 / HB27).